Consider the following 509-residue polypeptide: Sensor histidine kinase TrcS (509 aa).

Transmembrane regions (helical) follow at residues 24-44 (LLLGVLAVVTVVLVAVGVVSV) and 188-208 (VALVGAALVVTAALTVWVVGY). Residues 207–269 (GYALRPLRRV…LLDNVDGALA (63 aa)) enclose the HAMP domain. Positions 284 to 502 (DASHELRTPL…VFRVRLPMIE (219 aa)) constitute a Histidine kinase domain. H287 is subject to Phosphohistidine; by autocatalysis.

Requires a divalent metal cation as cofactor. Post-translationally, autophosphorylated.

The protein resides in the cell membrane. The enzyme catalyses ATP + protein L-histidine = ADP + protein N-phospho-L-histidine.. Its function is as follows. Member of the two-component regulatory system TrcS/TrcR. Phosphorylates TrcR. The TrcR-TrcS regulatory system may act as a transition regulatory system involved in adapting to an intracellular environment and transitioning from latency to reactivation. This is Sensor histidine kinase TrcS from Mycobacterium tuberculosis (strain ATCC 25618 / H37Rv).